Here is a 207-residue protein sequence, read N- to C-terminus: Large ribosomal subunit protein bL25 (207 aa).

The segment at 1-20 (MANHQIKAQRRKDEGKGASR) is disordered.

This sequence belongs to the bacterial ribosomal protein bL25 family. CTC subfamily. As to quaternary structure, part of the 50S ribosomal subunit; part of the 5S rRNA/L5/L18/L25 subcomplex. Contacts the 5S rRNA. Binds to the 5S rRNA independently of L5 and L18.

In terms of biological role, this is one of the proteins that binds to the 5S RNA in the ribosome where it forms part of the central protuberance. The sequence is that of Large ribosomal subunit protein bL25 from Xylella fastidiosa (strain M23).